The following is a 60-amino-acid chain: DVEAGFIEFRDLLGHCRFRDCRHDREPGCALLKALDEGRIQPQRMASYRHILASLPEPEY.

This sequence to E.coli YjeQ and H.influenzae HI_1714.

This is an uncharacterized protein from Azotobacter vinelandii.